A 362-amino-acid polypeptide reads, in one-letter code: Caveolae-associated protein 4 (362 aa).

The tract at residues 1–24 is disordered; the sequence is MEHNGSASNAGKIHQNRLSSVTED. A coiled-coil region spans residues 100-120; that stretch reads IKDVKARVEKQQVRVTKVETK. Phosphoserine occurs at positions 152, 171, and 172. Basic and acidic residues-rich tracts occupy residues 230–255, 275–289, and 305–320; these read RERL…ERFK, KAKD…VDRG, and HEFH…KEVT. Disordered regions lie at residues 230–289 and 305–346; these read RERL…VDRG and HEFH…KPQV. The residue at position 324 (Tyr324) is a Phosphotyrosine. The residue at position 334 (Thr334) is a Phosphothreonine. Ser353 carries the phosphoserine modification.

Belongs to the CAVIN family. Component of the CAVIN complex composed of CAVIN1, CAVIN2, CAVIN3 and CAVIN4. Interacts with CAVIN1. Interacts with CAVIN2; this augments the transactivation of NPPA. Interacts with CAV3, ADRA1A, ADRA1B, MAPK1 and MAPK3. In terms of tissue distribution, abundantly expressed in cardiac and skeletal muscle (at protein level). Weaker expression in aorta and lung. In heart, expressed in cardiomyocytes and vascular smooth muscle cells but not in other surrounding cells including vascular endothelial cells.

It is found in the cytoplasm. It localises to the myofibril. Its subcellular location is the sarcomere. The protein localises to the cytosol. The protein resides in the membrane. It is found in the caveola. It localises to the cell membrane. Its subcellular location is the sarcolemma. Its function is as follows. Modulates the morphology of formed caveolae in cardiomyocytes, but is not required for caveolar formation. Facilitates the recruitment of MAPK1/3 to caveolae within cardiomyocytes and regulates alpha-1 adrenergic receptor-induced hypertrophic responses in cardiomyocytes through MAPK1/3 activation. Contributes to proper membrane localization and stabilization of caveolin-3 (CAV3) in cardiomyocytes. Induces RHOA activation and activates NPPA transcription and myofibrillar organization through the Rho/ROCK signaling pathway. This Mus musculus (Mouse) protein is Caveolae-associated protein 4 (Cavin4).